A 199-amino-acid polypeptide reads, in one-letter code: MSIYFSGLMAPLDKNNVDTDQIIPKQFLTSTSREGFDAALFYDWRYLENDEPNPDFILNRPCYQGAQILLTRDNFGCGSSREHAPWALKQYGFEVILAESFADIFFNNCGNNQMLAIALPGDTLEQLFVLSEQHDDIHIDIDLENQTLTSTKFAPISFDIRKDVKERLLSGLDFIGVTETLNPQIDAFEQQLAAERPWQ.

This sequence belongs to the LeuD family. LeuD type 1 subfamily. Heterodimer of LeuC and LeuD.

It carries out the reaction (2R,3S)-3-isopropylmalate = (2S)-2-isopropylmalate. It participates in amino-acid biosynthesis; L-leucine biosynthesis; L-leucine from 3-methyl-2-oxobutanoate: step 2/4. Catalyzes the isomerization between 2-isopropylmalate and 3-isopropylmalate, via the formation of 2-isopropylmaleate. This is 3-isopropylmalate dehydratase small subunit from Pseudoalteromonas translucida (strain TAC 125).